The chain runs to 235 residues: Glutathione S-transferase 1 (235 aa).

Residues 36–113 enclose the GST N-terminal domain; that stretch reads EKYTLTYFNG…LLGGRFGLLG (78 aa). Glutathione contacts are provided by residues Tyr42, Trp73, Lys77, Val85, and 97-98; that span reads ES. The GST C-terminal domain maps to 115–235; that stretch reads NDWEEAKIMA…WIKKRPKTYF (121 aa).

Belongs to the GST superfamily. Homodimer.

It carries out the reaction RX + glutathione = an S-substituted glutathione + a halide anion + H(+). The sequence is that of Glutathione S-transferase 1 (GST1) from Onchocerca volvulus.